The chain runs to 264 residues: Glutamate racemase (264 aa).

Residues 10-11 and 42-43 contribute to the substrate site; these read DS and YG. Cys-73 functions as the Proton donor/acceptor in the catalytic mechanism. 74 to 75 is a substrate binding site; that stretch reads NT. The active-site Proton donor/acceptor is Cys-183. 184 to 185 serves as a coordination point for substrate; sequence TH.

The protein belongs to the aspartate/glutamate racemases family.

It carries out the reaction L-glutamate = D-glutamate. Its pathway is cell wall biogenesis; peptidoglycan biosynthesis. Functionally, provides the (R)-glutamate required for cell wall biosynthesis. This is Glutamate racemase from Streptococcus pyogenes serotype M18 (strain MGAS8232).